A 522-amino-acid polypeptide reads, in one-letter code: Serine/threonine-protein kinase pak-2 (522 aa).

One can recognise a CRIB domain in the interval 16–29; that stretch reads ISTPSNFEHRIHAG. Positions 183-204 are enriched in polar residues; that stretch reads TTTPQLQPKSPSTPQAMRQQPK. The disordered stretch occupies residues 183 to 208; sequence TTTPQLQPKSPSTPQAMRQQPKCTEG. A Protein kinase domain is found at 231–482; the sequence is LTDYKQIGEG…AKDLLRHPFF (252 aa). Residues 237 to 245 and K260 each bind ATP; that span reads IGEGSTGVV. D350 functions as the Proton acceptor in the catalytic mechanism.

This sequence belongs to the protein kinase superfamily. STE Ser/Thr protein kinase family. STE20 subfamily. Mg(2+) is required as a cofactor. Mn(2+) serves as cofactor. In terms of tissue distribution, expressed in pharynx, vulva and spermatheca. Unlike other p21-activated kinases, expression is not detected in neurons.

The catalysed reaction is L-seryl-[protein] + ATP = O-phospho-L-seryl-[protein] + ADP + H(+). It catalyses the reaction L-threonyl-[protein] + ATP = O-phospho-L-threonyl-[protein] + ADP + H(+). Functionally, serine/threonine-protein kinase which plays a redundant role with pak-1 in embryogenesis but, in contrast to pak-1, is not involved in commissural axon guidance of ventral cord motoneurons or in distal tip cell (DTC) migration. This chain is Serine/threonine-protein kinase pak-2, found in Caenorhabditis elegans.